The primary structure comprises 184 residues: Putative serine carboxypeptidase-like 52 (184 aa).

An N-terminal signal peptide occupies residues 1–22 (MRTFSPKLLLLLLLVLRHHAES). Asn-93 carries an N-linked (GlcNAc...) asparagine glycan.

The protein belongs to the peptidase S10 family.

The protein localises to the secreted. This Arabidopsis thaliana (Mouse-ear cress) protein is Putative serine carboxypeptidase-like 52 (SCPL52).